The chain runs to 161 residues: Lipoprotein signal peptidase (161 aa).

Transmembrane regions (helical) follow at residues 9 to 29 (ISLLMTFIVLVFDQVSKWLIT), 63 to 83 (KMLFFYIITIIILIVLVIFYI), and 88 to 108 (FNLFMQVAISLLFAGALGNFI). Residues aspartate 118 and aspartate 136 contribute to the active site. A helical membrane pass occupies residues 131-151 (IFNIADSSLTIGVIFVIITLI).

It belongs to the peptidase A8 family.

Its subcellular location is the cell membrane. The enzyme catalyses Release of signal peptides from bacterial membrane prolipoproteins. Hydrolyzes -Xaa-Yaa-Zaa-|-(S,diacylglyceryl)Cys-, in which Xaa is hydrophobic (preferably Leu), and Yaa (Ala or Ser) and Zaa (Gly or Ala) have small, neutral side chains.. The protein operates within protein modification; lipoprotein biosynthesis (signal peptide cleavage). This protein specifically catalyzes the removal of signal peptides from prolipoproteins. The sequence is that of Lipoprotein signal peptidase from Staphylococcus epidermidis (strain ATCC 35984 / DSM 28319 / BCRC 17069 / CCUG 31568 / BM 3577 / RP62A).